We begin with the raw amino-acid sequence, 133 residues long: Fluoride-specific ion channel FluC (133 aa).

4 helical membrane passes run 12–32 (LAMT…ASLI), 41–61 (WGTL…LVWL), 76–96 (IVGV…CLVF), and 104–124 (MIGI…VAGA). G81 and T84 together coordinate Na(+).

It belongs to the fluoride channel Fluc/FEX (TC 1.A.43) family.

It localises to the cell inner membrane. It catalyses the reaction fluoride(in) = fluoride(out). Its activity is regulated as follows. Na(+) is not transported, but it plays an essential structural role and its presence is essential for fluoride channel function. Fluoride-specific ion channel. Important for reducing fluoride concentration in the cell, thus reducing its toxicity. In Xanthomonas euvesicatoria pv. vesicatoria (strain 85-10) (Xanthomonas campestris pv. vesicatoria), this protein is Fluoride-specific ion channel FluC.